The primary structure comprises 551 residues: Membrane protein insertase YidC (551 aa).

A helical transmembrane segment spans residues 3–23 (ANHIRILLLVTIAIMLISLMG). Residues 30–43 (PSNSSQSQTTQTQQ) show a composition bias toward low complexity. Positions 30 to 61 (PSNSSQSQTTQTQQDNSHYNSDTPATTNVSTS) are disordered. The span at 44 to 61 (DNSHYNSDTPATTNVSTS) shows a compositional bias: polar residues. 3 helical membrane-spanning segments follow: residues 361 to 381 (LVGN…LIFY), 431 to 451 (LSGC…YWVL), and 504 to 524 (IMMF…SGLV).

This sequence belongs to the OXA1/ALB3/YidC family. Type 1 subfamily. Interacts with the Sec translocase complex via SecD. Specifically interacts with transmembrane segments of nascent integral membrane proteins during membrane integration.

Its subcellular location is the cell inner membrane. Its function is as follows. Required for the insertion and/or proper folding and/or complex formation of integral membrane proteins into the membrane. Involved in integration of membrane proteins that insert both dependently and independently of the Sec translocase complex, as well as at least some lipoproteins. Aids folding of multispanning membrane proteins. In Francisella philomiragia subsp. philomiragia (strain ATCC 25017 / CCUG 19701 / FSC 153 / O#319-036), this protein is Membrane protein insertase YidC.